We begin with the raw amino-acid sequence, 207 residues long: Outer-membrane lipoprotein LolB (207 aa).

Positions 1-21 (MTLPDFRLIRLLPLASLVLTA) are cleaved as a signal peptide. Cys22 is lipidated: N-palmitoyl cysteine. Cys22 carries S-diacylglycerol cysteine lipidation.

Belongs to the LolB family. In terms of assembly, monomer.

Its subcellular location is the cell outer membrane. Plays a critical role in the incorporation of lipoproteins in the outer membrane after they are released by the LolA protein. The sequence is that of Outer-membrane lipoprotein LolB from Salmonella agona (strain SL483).